The sequence spans 115 residues: NADH-ubiquinone oxidoreductase chain 3 (115 aa).

3 consecutive transmembrane segments (helical) span residues 3-23 (LILT…IAFW), 55-75 (FFLV…LLPL), and 86-106 (TMLT…AYEW).

It belongs to the complex I subunit 3 family. Core subunit of respiratory chain NADH dehydrogenase (Complex I) which is composed of 45 different subunits. Interacts with TMEM186. Interacts with TMEM242.

Its subcellular location is the mitochondrion inner membrane. The enzyme catalyses a ubiquinone + NADH + 5 H(+)(in) = a ubiquinol + NAD(+) + 4 H(+)(out). Its function is as follows. Core subunit of the mitochondrial membrane respiratory chain NADH dehydrogenase (Complex I) which catalyzes electron transfer from NADH through the respiratory chain, using ubiquinone as an electron acceptor. Essential for the catalytic activity of complex I. The polypeptide is NADH-ubiquinone oxidoreductase chain 3 (Rhinoceros unicornis (Greater Indian rhinoceros)).